The following is a 2922-amino-acid chain: Small ribosomal subunit protein uS4c (2922 aa).

The S4 RNA-binding domain maps to 111 to 174 (MRLDNIVFRL…ISMELVSRFL (64 aa)).

The protein belongs to the universal ribosomal protein uS4 family. Part of the 30S ribosomal subunit. Contacts protein S5. The interaction surface between S4 and S5 is involved in control of translational fidelity.

The protein resides in the plastid. Its subcellular location is the chloroplast. In terms of biological role, one of the primary rRNA binding proteins, it binds directly to 16S rRNA where it nucleates assembly of the body of the 30S subunit. Its function is as follows. With S5 and S12 plays an important role in translational accuracy. This Stigeoclonium helveticum (Green alga) protein is Small ribosomal subunit protein uS4c (rps4).